Here is a 94-residue protein sequence, read N- to C-terminus: Large ribosomal subunit protein uL23c (94 aa).

This sequence belongs to the universal ribosomal protein uL23 family. Part of the 50S ribosomal subunit.

It localises to the plastid. The protein resides in the chloroplast. Binds to 23S rRNA. The chain is Large ribosomal subunit protein uL23c (rpl23) from Tupiella akineta (Green alga).